Consider the following 215-residue polypeptide: Probable phosphoglycerate mutase GpmB (215 aa).

Substrate-binding positions include 8-15 (RHGETLWN), 21-22 (QG), Arg-58, Arg-60, 82-85 (ELNM), and 151-152 (GM). His-9 (tele-phosphohistidine intermediate) is an active-site residue. The Proton donor/acceptor role is filled by Glu-82.

It belongs to the phosphoglycerate mutase family. GpmB subfamily.

The catalysed reaction is (2R)-2-phosphoglycerate = (2R)-3-phosphoglycerate. Its pathway is carbohydrate degradation; glycolysis; pyruvate from D-glyceraldehyde 3-phosphate: step 3/5. The chain is Probable phosphoglycerate mutase GpmB from Erwinia tasmaniensis (strain DSM 17950 / CFBP 7177 / CIP 109463 / NCPPB 4357 / Et1/99).